A 358-amino-acid chain; its full sequence is Putative spore germination protein YfkT (358 aa).

Transmembrane regions (helical) follow at residues 10 to 30 (LFFG…ILMI), 36 to 56 (NAWH…WLMH), 81 to 101 (IIIL…IRFF), 107 to 127 (ILFL…FVAI), 143 to 163 (IFLF…ATQI), 179 to 199 (LQSG…PLLF), 210 to 230 (IFAI…SISV), 262 to 282 (IIAA…LYIV), 297 to 317 (AMYT…FLNT), and 326 to 346 (IKPI…YLII).

The protein belongs to the amino acid-polyamine-organocation (APC) superfamily. Spore germination protein (SGP) (TC 2.A.3.9) family.

Its subcellular location is the cell membrane. Functionally, may be involved in spore germination. This chain is Putative spore germination protein YfkT (yfkT), found in Bacillus subtilis (strain 168).